The sequence spans 198 residues: Nucleoplasmin (198 aa).

Positions 35–38 are acidic tract A1; that stretch reads SDED. Acidic residues predominate over residues 125-145; sequence SWAEEEGEEEVEEEEEEEDPE. The tract at residues 125 to 198 is disordered; that stretch reads SWAEEEGEEE…GRGRKPAAKK (74 aa). Residues 128 to 145 form an acidic tract A2 region; it reads EEEGEEEVEEEEEEEDPE. The segment covering 150-167 has biased composition (basic residues); it reads AVKRPAASKKGSQAKKKK. The Bipartite nuclear localization signal motif lies at 152–167; that stretch reads KRPAASKKGSQAKKKK. An acidic tract A3 region spans residues 172–174; it reads EEE. Residues 183–198 are compositionally biased toward basic residues; the sequence is KKGKGAGRGRKPAAKK.

Belongs to the nucleoplasmin family. As to quaternary structure, homopentamer. As to expression, expressed in oocytes.

The protein resides in the nucleus. Acts as a chaperone for histones, such as histone H2A-H2B, and thus regulates the assembly of nucleosome cores. Involved in chromatin remodeling, especially during fertilization and early embryonic development. May be involved in sperm chromatin decondensation during fertilization. The sequence is that of Nucleoplasmin from Rhinella marina (Cane toad).